The following is a 1027-amino-acid chain: C2 and GRAM domain-containing protein At5g50170 (1027 aa).

The C2 1 domain occupies 1–103 (MRLYVYILQA…ENQTLLPTWF (103 aa)). The segment covering 158-167 (SPKDLISSRD) has biased composition (basic and acidic residues). Disordered regions lie at residues 158–177 (SPKD…HDGK) and 201–223 (LHDE…DQCS). Basic residues predominate over residues 168 to 177 (GKRRKHHDGK). Residues 206-223 (SVGQSVNSNYEDATDQCS) are compositionally biased toward polar residues. The region spanning 253 to 426 (TGGVLVDQKY…LLAKTYKTLD (174 aa)) is the VASt 1 domain. A helical transmembrane segment spans residues 452–472 (FLYFWSSSVICAVLLSVYVVV). A C2 2 domain is found at 516–639 (TVHFVQARLH…TADELADLSV (124 aa)). One can recognise a GRAM domain in the interval 693-756 (AFQKLFGLPH…LWEDIDDIQV (64 aa)). A VASt 2 domain is found at 855 to 1018 (MMSKVYTCDL…VIFDLFQKES (164 aa)).

The protein resides in the membrane. The polypeptide is C2 and GRAM domain-containing protein At5g50170 (Arabidopsis thaliana (Mouse-ear cress)).